The primary structure comprises 364 residues: Chorismate synthase (364 aa).

Residues arginine 47 and arginine 53 each contribute to the NADP(+) site. FMN contacts are provided by residues 124-126, glycine 286, 301-305, and arginine 327; these read RSS and KPTAT.

This sequence belongs to the chorismate synthase family. In terms of assembly, homotetramer. FMNH2 serves as cofactor.

It catalyses the reaction 5-O-(1-carboxyvinyl)-3-phosphoshikimate = chorismate + phosphate. It participates in metabolic intermediate biosynthesis; chorismate biosynthesis; chorismate from D-erythrose 4-phosphate and phosphoenolpyruvate: step 7/7. Its function is as follows. Catalyzes the anti-1,4-elimination of the C-3 phosphate and the C-6 proR hydrogen from 5-enolpyruvylshikimate-3-phosphate (EPSP) to yield chorismate, which is the branch point compound that serves as the starting substrate for the three terminal pathways of aromatic amino acid biosynthesis. This reaction introduces a second double bond into the aromatic ring system. This chain is Chorismate synthase, found in Acaryochloris marina (strain MBIC 11017).